Reading from the N-terminus, the 101-residue chain is Phosphoribosyl-AMP cyclohydrolase (101 aa).

D71 provides a ligand contact to Mg(2+). C72 is a binding site for Zn(2+). Residues D73 and D75 each contribute to the Mg(2+) site. Zn(2+)-binding residues include C88 and C95.

This sequence belongs to the PRA-CH family. As to quaternary structure, homodimer. Requires Mg(2+) as cofactor. Zn(2+) serves as cofactor.

The protein resides in the cytoplasm. It catalyses the reaction 1-(5-phospho-beta-D-ribosyl)-5'-AMP + H2O = 1-(5-phospho-beta-D-ribosyl)-5-[(5-phospho-beta-D-ribosylamino)methylideneamino]imidazole-4-carboxamide. Its pathway is amino-acid biosynthesis; L-histidine biosynthesis; L-histidine from 5-phospho-alpha-D-ribose 1-diphosphate: step 3/9. In terms of biological role, catalyzes the hydrolysis of the adenine ring of phosphoribosyl-AMP. The polypeptide is Phosphoribosyl-AMP cyclohydrolase (Bacillus cereus (strain AH187)).